The primary structure comprises 209 residues: Large ribosomal subunit protein bL21m (209 aa).

The transit peptide at methionine 1–phenylalanine 43 directs the protein to the mitochondrion.

This sequence belongs to the bacterial ribosomal protein bL21 family. In terms of assembly, component of the mitochondrial ribosome large subunit (39S) which comprises a 16S rRNA and about 50 distinct proteins.

The protein localises to the mitochondrion. The polypeptide is Large ribosomal subunit protein bL21m (Mrpl21) (Mus musculus (Mouse)).